Reading from the N-terminus, the 857-residue chain is QIVGGLIGGHHDSKKVKGTVVMMKKNALDFTDLAGSLTDKIFEALGQKVSFQLISSVQSDPANGLQGKHSNPAYLENFLFTLTPLAAGETAFGVTFDWNEEFGVPGAFIIKNTHINEFFLKSLTLEDVPNHGKVHFVCNSWVYPSFRYKSDRIFFANQPYLPSETPELLRKYRENELLTLRGDGTGKREAWDRIYDYDVYNDLGNPDQGEQNVRTTLGGSADYPYPRRGRTGRPPTRTDPKSESRIPLILSLDIYVPRDERFGHLKMSDFLTYALKSIVQFILPELHALFDGTPNEFDSFEDVLRLYEGGIKLPQGPLFKALTAAIPLEMMKELLRTDGEGILRFPTPLVIKDSKTAWRTDEEFAREMLAGVNPIIISRLQEFPPKSKLDPEAYGNQNSTITAEHIEDKLDGLTVDEAMNNNKLFILNHHDVLIPYLRRINTTTTKTYASRTLLFLQDNGSLKPLAIELSLPHPDGDQFGVISKVYTPSDQGVESSIWQLAKAYVAVNDSGVHQLISHWLNTHAVIEPFVIATNRQLSVLHPIHKLLYPHFRDTMNINAMARQILINAGGVLESTVFPSKFAMEMSAVVYKDWVFPDQALPADLVKRGVAVEDSSSPHGVRLLIEDYPYAVDGLEIWSAIKSWVTDYCSFYYGSDEEILKDNELQAWWKELREVGHGDKKNEPWWPEMETPQELIDSCTTIIWIASALHAAVNFGQYPYAGYLPNRPTVSRRFMPEPGTPEYEELKKNPDKAFLKTITAQLQTLLGVSLIEILSRHTTDEIYLGQRESPEWTKDKEPLAAFDKFGKKLTDIEKQIIQRNGDNILTNRSGPVNAPYTLLFPTSEGGLTGKGIPNSVSI.

One can recognise a PLAT domain in the interval N26–A156. A Lipoxygenase domain is found at P159–I857. Residues N205–E243 are disordered. Polar residues predominate over residues Q208–G218. Residues H518, H523, H709, N713, and I857 each contribute to the Fe cation site.

The protein belongs to the lipoxygenase family. Monomer. Fe cation is required as a cofactor. Expressed in tubers and roots. Detected in leaves, petioles and stems.

It localises to the cytoplasm. It catalyses the reaction (9Z,12Z)-octadecadienoate + O2 = (9S)-hydroperoxy-(10E,12Z)-octadecadienoate. It participates in lipid metabolism; oxylipin biosynthesis. In terms of biological role, plant lipoxygenases may be involved in a number of diverse aspects of plant physiology including growth and development, pest resistance, and senescence or responses to wounding. Catalyzes the hydroperoxidation of lipids containing a cis,cis-1,4-pentadiene structure. Linoleic and linolenic acids are the preferred substrates, but is also active with arachidonic acid. The products are almost exclusively the S enantiomers. The sequence is that of Linoleate 9S-lipoxygenase 6 (LOX1.6) from Solanum tuberosum (Potato).